A 245-amino-acid chain; its full sequence is Acyl-protein thioesterase 1 (245 aa).

Catalysis depends on charge relay system residues Ser126, Asp182, and His214.

Belongs to the AB hydrolase superfamily. AB hydrolase 2 family.

It is found in the cytoplasm. It localises to the nucleus. The enzyme catalyses S-hexadecanoyl-L-cysteinyl-[protein] + H2O = L-cysteinyl-[protein] + hexadecanoate + H(+). In terms of biological role, hydrolyzes fatty acids from S-acylated cysteine residues in proteins with a strong preference for palmitoylated G-alpha proteins over other acyl substrates. Mediates the deacylation of G-alpha proteins such as GPA1 in vivo, but has weak or no activity toward palmitoylated Ras proteins. Has weak lysophospholipase activity in vitro; however such activity may not exist in vivo. This Neurospora crassa (strain ATCC 24698 / 74-OR23-1A / CBS 708.71 / DSM 1257 / FGSC 987) protein is Acyl-protein thioesterase 1.